The following is a 273-amino-acid chain: 4-hydroxy-tetrahydrodipicolinate reductase (273 aa).

NAD(+) contacts are provided by residues glycine 12–methionine 17 and glutamate 38. Arginine 39 lines the NADP(+) pocket. NAD(+) is bound by residues glycine 102–threonine 104 and alanine 126–phenylalanine 129. Residue histidine 159 is the Proton donor/acceptor of the active site. Histidine 160 contacts (S)-2,3,4,5-tetrahydrodipicolinate. Catalysis depends on lysine 163, which acts as the Proton donor. Residue glycine 169–threonine 170 participates in (S)-2,3,4,5-tetrahydrodipicolinate binding.

Belongs to the DapB family. Homotetramer.

Its subcellular location is the cytoplasm. The enzyme catalyses (S)-2,3,4,5-tetrahydrodipicolinate + NAD(+) + H2O = (2S,4S)-4-hydroxy-2,3,4,5-tetrahydrodipicolinate + NADH + H(+). It carries out the reaction (S)-2,3,4,5-tetrahydrodipicolinate + NADP(+) + H2O = (2S,4S)-4-hydroxy-2,3,4,5-tetrahydrodipicolinate + NADPH + H(+). The protein operates within amino-acid biosynthesis; L-lysine biosynthesis via DAP pathway; (S)-tetrahydrodipicolinate from L-aspartate: step 4/4. In terms of biological role, catalyzes the conversion of 4-hydroxy-tetrahydrodipicolinate (HTPA) to tetrahydrodipicolinate. This is 4-hydroxy-tetrahydrodipicolinate reductase from Salmonella schwarzengrund (strain CVM19633).